A 2543-amino-acid polypeptide reads, in one-letter code: Polyketide synthase PksR (2543 aa).

The interval 165-269 (LEIGAGTGGT…KAVLKKNGLL (105 aa)) is methyltransferase. The Carrier 1 domain occupies 376–452 (SLIEQTAQFV…ELVEYLVKGH (77 aa)). O-(pantetheine 4'-phosphoryl)serine is present on S413. The tract at residues 465–485 (TKPAKNEAPLQTERTDPNKPF) is disordered. One can recognise a Ketosynthase family 3 (KS3) 1 domain in the interval 527–959 (TEDIAIIGVS…GAYANLIIEE (433 aa)). C700 serves as the catalytic For beta-ketoacyl synthase 1 activity. The interval 1114–1242 (HFDVSSINEK…GQCGIGSFEP (129 aa)) is N-terminal hotdog fold. One can recognise a PKS/mFAS DH domain in the interval 1114–1397 (HFDVSSINEK…LKQLRISNQR (284 aa)). Residues 1255-1397 (TKLHHIDQMY…LKQLRISNQR (143 aa)) form a C-terminal hotdog fold region. A Carrier 2 domain is found at 1407–1485 (SNLKARIRSY…ELIDFFADKH (79 aa)). The residue at position 1445 (S1445) is an O-(pantetheine 4'-phosphoryl)serine. A Ketosynthase family 3 (KS3) 2 domain is found at 1528–1946 (ADGIAIIGMS…GVNAHVILEE (419 aa)). Catalysis depends on for beta-ketoacyl synthase 2 activity residues C1680, H1815, and H1862. In terms of domain architecture, Carrier 3 spans 2134–2208 (RINNSSDHHI…DMMDLIAKKQ (75 aa)). An O-(pantetheine 4'-phosphoryl)serine modification is found at S2168. The interval 2234-2514 (RPVFWFHGGV…EFCEKLYSNR (281 aa)) is thioesterase.

It depends on pantetheine 4'-phosphate as a cofactor.

It is found in the cytoplasm. It participates in antibiotic biosynthesis; bacillaene biosynthesis. Functionally, involved in some intermediate steps for the synthesis of the antibiotic polyketide bacillaene which is involved in secondary metabolism. The sequence is that of Polyketide synthase PksR (pksR) from Bacillus subtilis (strain 168).